A 356-amino-acid chain; its full sequence is S-adenosylmethionine:tRNA ribosyltransferase-isomerase (356 aa).

Belongs to the QueA family. Monomer.

It is found in the cytoplasm. The catalysed reaction is 7-aminomethyl-7-carbaguanosine(34) in tRNA + S-adenosyl-L-methionine = epoxyqueuosine(34) in tRNA + adenine + L-methionine + 2 H(+). It functions in the pathway tRNA modification; tRNA-queuosine biosynthesis. Transfers and isomerizes the ribose moiety from AdoMet to the 7-aminomethyl group of 7-deazaguanine (preQ1-tRNA) to give epoxyqueuosine (oQ-tRNA). This is S-adenosylmethionine:tRNA ribosyltransferase-isomerase from Xanthomonas campestris pv. campestris (strain 8004).